A 293-amino-acid chain; its full sequence is Protein orai (293 aa).

Residues 1-122 (MPRSHDPSRV…RAQLKASSRT (122 aa)) are Cytoplasmic-facing. A disordered region spans residues 62-81 (STAGGGSRNGVGSKEGSVTS). Residues 123 to 141 (SALLAGFAMVCLVELQYDQ) traverse the membrane as a helical segment. Topologically, residues 142–146 (STPKP) are extracellular. The helical transmembrane segment at 147-167 (LLIVLGVVTSLLVSVHLLALM) threads the bilayer. At 168–198 (MSTCILPYMEATGCTQDSPHIKLKFYIDLSW) the chain is on the cytoplasmic side. A helical membrane pass occupies residues 199 to 219 (LFSTCIGLLLFLVEIGVIFYV). Topologically, residues 220 to 230 (KFTAVGYPTAG) are extracellular. Residues 231 to 251 (YITTAMLVPVGVVFVVFSYLI) form a helical membrane-spanning segment. The Cytoplasmic portion of the chain corresponds to 252-293 (HKNRVSHSLGRFKHKVDTMKQFLDVEANLQKSTLAPSTIRDI).

This sequence belongs to the Orai family. Expressed in gonad sheath cells, hypodermis, intestine and spermatheca. Coexpressed with stim-1.

It localises to the membrane. Functionally, ca(2+) release-activated Ca(2+)-like (CRAC-like) channel subunit which mediates Ca(2+) influx and increase in Ca(2+)-selective current by synergy with the Ca(2+) sensor, stim-1. Required for Ca(2+) and IP3-dependent contractile activity of sheath cells and the spermatheca. Affects brood size and somatic cell function. The chain is Protein orai (orai-1) from Caenorhabditis elegans.